The chain runs to 2555 residues: Squalestatin hexaketide synthase clz14 (2555 aa).

The segment at 1–84 (MDVSKEAGHH…PNATSTTTTT (84 aa)) is disordered. The span at 10 to 84 (HANGFANGNT…PNATSTTTTT (75 aa)) shows a compositional bias: low complexity. One can recognise a Ketosynthase family 3 (KS3) domain in the interval 91–511 (QVPVAICGIG…GSNTHIIIDS (421 aa)). Active-site for beta-ketoacyl synthase activity residues include Cys-261, His-398, and His-435. A malonyl-CoA:ACP transacylase (MAT) domain region spans residues 611-928 (FIFTGQGAQW…LEGIGKLFCF (318 aa)). The interval 975–1104 (HELLGERSLE…GLVTASVVTS (130 aa)) is N-terminal hotdog fold. The segment at 975–1256 (HELLGERSLE…RGFKCKKTDD (282 aa)) is dehydratase (DH) domain. The region spanning 975–1260 (HELLGERSLE…CKKTDDAFIQ (286 aa)) is the PKS/mFAS DH domain. His-1007 acts as the Proton acceptor; for dehydratase activity in catalysis. Residues 1117–1260 (SRKVDTSRWY…CKKTDDAFIQ (144 aa)) form a C-terminal hotdog fold region. The active-site Proton donor; for dehydratase activity is Asp-1177. The segment at 1424 to 1595 (SFFQAAGLNK…GFEGAGTVVL (172 aa)) is methyltransferase (CMet) domain. Residues 1821–2141 (GMLNTLHWVG…RGVHMGRIVV (321 aa)) are enoyl reductase (ER) (ER) domain. A ketoreductase (KR) domain region spans residues 2165-2338 (STYLLTGGMG…PASVIDIAAI (174 aa)). One can recognise a Carrier domain in the interval 2468–2546 (IIFAQEIAKR…SLGRLATKRL (79 aa)). Position 2505 is an O-(pantetheine 4'-phosphoryl)serine (Ser-2505).

The protein operates within secondary metabolite biosynthesis. Its function is as follows. Highly reducing polyketide synthase (HR-PKS); part of the gene cluster that mediates the biosynthesis of squalestatin S1 (SQS1, also known as zaragozic acid A), a heavily oxidized fungal polyketide that offers potent cholesterol lowering activity by targeting squalene synthase (SS). SQS1 is composed of a 2,8-dioxobicyclic[3.2.1]octane-3,4,5-tricarboxyclic acid core that is connected to two lipophilic polyketide arms. These initial steps feature the priming of an unusual benzoic acid starter unit onto the highly reducing polyketide synthase clz14, followed by oxaloacetate extension and product release to generate a tricarboxylic acid containing product. The phenylalanine ammonia lyase (PAL) clz10 and the acyl-CoA ligase clz12 are involved in transforming phenylalanine into benzoyl-CoA. The citrate synthase-like protein clz17 is involved in connecting the C-alpha-carbons of the hexaketide chain and oxaloacetate to afford the tricarboxylic acid unit. The potential hydrolytic enzymes, clz11 and clz13, are in close proximity to pks2 and may participate in product release. On the other side, the tetraketide arm is synthesized by a the squalestatin tetraketide synthase clz2 and enzymatically esterified to the core in the last biosynthetic step, by the acetyltransferase clz6. The biosynthesis of the tetraketide must involve 3 rounds of chain extension. After the first and second rounds methyl-transfer occurs, and in all rounds of extension the ketoreductase and dehydratase are active. The enoyl reductase and C-MeT of clz2 are not active in the final round of extension. The acetyltransferase clz6 appears to have a broad substrate selectivity for its acyl CoA substrate, allowing the in vitro synthesis of novel squalestatins. The biosynthesis of SQS1 requires several oxidative steps likely performed by oxidoreductases clz3, clz15 and clz16. Finally, in support of the identification of the cluster as being responsible for SQS1 production, the cluster contains a gene encoding a putative squalene synthase (SS) clz20, suggesting a likely mechanism for self-resistance. This is Squalestatin hexaketide synthase clz14 from Cochliobolus lunatus (Filamentous fungus).